We begin with the raw amino-acid sequence, 427 residues long: Homoserine O-acetyltransferase FUB5 (427 aa).

A compositionally biased stretch (low complexity) spans 1-13 (MTTTTTAPALPTP). The tract at residues 1-35 (MTTTTTAPALPTPIHDGLGNGTTYERSIPRPVNPF) is disordered. The 324-residue stretch at 77-400 (NVMIICHALS…VSDDGHDAFL (324 aa)) folds into the AB hydrolase-1 domain. Serine 175 functions as the Nucleophile in the catalytic mechanism. The disordered stretch occupies residues 260-297 (RFGRDTGNKKKAKNKGSETLPSNSTPIHSQGGADETPV). Residues 276 to 287 (SETLPSNSTPIH) show a composition bias toward polar residues. Active-site residues include aspartate 367 and histidine 396.

This sequence belongs to the AB hydrolase superfamily. MetX family.

The enzyme catalyses L-homoserine + acetyl-CoA = O-acetyl-L-homoserine + CoA. Its pathway is mycotoxin biosynthesis. In terms of biological role, homoserine O-acetyltransferase; part of the gene cluster that mediates the biosynthesis of fusaric acid, a mycotoxin with low to moderate toxicity to animals and humans, but with high phytotoxic properties. L-aspartate is suggested as fusaric acid amino acid precursor that is activated and further processed to O-acetyl-L-homoserine by cluster enzymes aspartate kinase FUB3 and homoserine O-acetyltransferase FUB5, as well as enzymes of the primary metabolism. The polyketide synthase (PKS) FUB1 generates the triketide trans-2-hexenal which is presumptively released by the hydrolase FUB4 and linked to the NRPS-bound amino acid precursor by NAD(P)-dependent dehydrogenase FUB6. FUB1, FUB4, and the non-canonical NRPS Fub8 may form an enzyme complex. Further processing of the NRPS-bound intermediate might be carried out by FUB6 and the sulfhydrylase FUB7, enabling a spontaneous electrocyclization to close the carbon backbone of fusaric acid. Dihydrofusaric acid is likely to be released via reduction by the thioester reductase (TR) domain of FUB8 whereupon the final oxidation to fusaric acid may (also) be performed by the FMN-dependent dehydrogenase FUB9. This is Homoserine O-acetyltransferase FUB5 from Gibberella fujikuroi (strain CBS 195.34 / IMI 58289 / NRRL A-6831) (Bakanae and foot rot disease fungus).